Consider the following 574-residue polypeptide: DNA mismatch repair protein MutL (574 aa).

This sequence belongs to the DNA mismatch repair MutL/HexB family.

In terms of biological role, this protein is involved in the repair of mismatches in DNA. It is required for dam-dependent methyl-directed DNA mismatch repair. May act as a 'molecular matchmaker', a protein that promotes the formation of a stable complex between two or more DNA-binding proteins in an ATP-dependent manner without itself being part of a final effector complex. The sequence is that of DNA mismatch repair protein MutL from Coxiella burnetii (strain RSA 331 / Henzerling II).